The sequence spans 595 residues: Thiol:disulfide interchange protein DsbD (595 aa).

The N-terminal stretch at 1-24 (MAQRFITLILLLCSVLLAPHSAQS) is a signal peptide. Cysteines 134 and 140 form a disulfide. Positions 166–186 (NSSATVNPPATTQPEGDATPV) are disordered. The next 9 membrane-spanning stretches (helical) occupy residues 197-217 (ALLI…YPLI), 233-253 (ILIL…LLGL), 270-290 (YVLI…FGLY), 311-331 (GGSL…CSPC), 332-352 (TTAP…MLAG), 353-373 (GGTL…VTLF), 384-404 (WMQY…VFLL), 411-431 (VWGL…AFVL), and 435-455 (AHAG…LIVA). A disulfide bridge links cysteine 209 with cysteine 331. One can recognise a Thioredoxin domain in the interval 452 to 592 (LIVARPLQDW…FLQHLQNTPA (141 aa)). Cysteine 507 and cysteine 510 are disulfide-bonded.

It belongs to the thioredoxin family. DsbD subfamily.

The protein localises to the cell inner membrane. It carries out the reaction [protein]-dithiol + NAD(+) = [protein]-disulfide + NADH + H(+). It catalyses the reaction [protein]-dithiol + NADP(+) = [protein]-disulfide + NADPH + H(+). In terms of biological role, required to facilitate the formation of correct disulfide bonds in some periplasmic proteins and for the assembly of the periplasmic c-type cytochromes. Acts by transferring electrons from cytoplasmic thioredoxin to the periplasm. This transfer involves a cascade of disulfide bond formation and reduction steps. The chain is Thiol:disulfide interchange protein DsbD from Yersinia pestis bv. Antiqua (strain Nepal516).